Consider the following 412-residue polypeptide: Putative competence-damage inducible protein (412 aa).

The protein belongs to the CinA family.

The polypeptide is Putative competence-damage inducible protein (Bacillus cereus (strain Q1)).